The following is a 335-amino-acid chain: Putative T-box protein 7 (335 aa).

Positions Leu73–Asn246 form a DNA-binding region, T-box.

It localises to the nucleus. The chain is Putative T-box protein 7 from Caenorhabditis elegans.